The following is a 746-amino-acid chain: PAN2-PAN3 deadenylation complex subunit pan3 (746 aa).

A C3H1-type zinc finger spans residues 7–35; that stretch reads PKNQKQCKNIALHGYCRNSDKCEFSHELT. Positions 64-97 are enriched in low complexity; that stretch reads QQQQQQQNSNGNGSNNTATSNNPIISPNSNIASP. Disordered regions lie at residues 64-100, 169-205, and 219-275; these read QQQQ…PLKK, DDQH…NMNN, and NASP…PSLQ. Positions 196–205 are enriched in polar residues; it reads NNGIDPNMNN. Residues 221–275 are compositionally biased toward low complexity; the sequence is SPQSYQQQFQQPNPSPQSSSQQQQQQQQQQQQAVYQQQQQQQPSSQPLAQNPSLQ. The pseudokinase domain stretch occupies residues 351 to 610; that stretch reads DPNDPRIKNI…NIDEVVLMIS (260 aa). ATP contacts are provided by residues R407, 457–464, and 509–510; these read EFFPGSET and SK. The stretch at 611 to 649 forms a coiled coil; that stretch reads GRLLQENNYLHTYTDDLETELSKEYENGRLFRLVTKLGF. A knob domain region spans residues 650–746; the sequence is INERPLYDMD…SELVSQKSHI (97 aa).

It belongs to the protein kinase superfamily. PAN3 family. As to quaternary structure, homodimer. Forms a heterotrimer with a catalytic subunit PAN2 to form the poly(A)-nuclease (PAN) deadenylation complex. Interacts (via PAM-2 motif) with poly(A)-binding protein (via PABC domain), conferring substrate specificity of the enzyme complex.

The protein resides in the cytoplasm. Regulatory subunit of the poly(A)-nuclease (PAN) deadenylation complex, one of two cytoplasmic mRNA deadenylases involved in mRNA turnover. PAN specifically shortens poly(A) tails of RNA and the activity is stimulated by poly(A)-binding protein (PABP). PAN deadenylation is followed by rapid degradation of the shortened mRNA tails by the CCR4-NOT complex. Deadenylated mRNAs are then degraded by two alternative mechanisms, namely exosome-mediated 3'-5' exonucleolytic degradation, or deadenylation-dependent mRNA decaping and subsequent 5'-3' exonucleolytic degradation by XRN1. PAN3 acts as a positive regulator for PAN activity, recruiting the catalytic subunit PAN2 to mRNA via its interaction with RNA and PABP. The protein is PAN2-PAN3 deadenylation complex subunit pan3 of Dictyostelium discoideum (Social amoeba).